The following is a 413-amino-acid chain: Gamma-DL-glutamyl hydrolase (413 aa).

The first 32 residues, 1 to 32 (MNTLANWKKFLLVAVIICFLVPIMTKAEIAEA), serve as a signal peptide directing secretion. NlpC/P60 domains are found at residues 33-159 (DTSS…RRIA), 163-287 (ATAD…RRFD), and 291-413 (IPKE…IRVQ). Catalysis depends on Cys-194, which acts as the Nucleophile. Catalysis depends on His-247, which acts as the Proton acceptor. Gln-259 is an active-site residue.

This sequence belongs to the peptidase C40 family.

Its subcellular location is the secreted. It localises to the cell wall. With respect to regulation, inhibited by pretreatment with 1 mM 4-(hydroxymercuri)benzoate, a sulfhydryl inhibitor. In terms of biological role, cleaves, in an endo-type manner, the gamma-glutamyl bond between D-glutamate and L-glutamate of poly-gamma-glutamate (PGA). The chain is Gamma-DL-glutamyl hydrolase (pgdS) from Bacillus subtilis (strain 168).